An 89-amino-acid chain; its full sequence is Small ribosomal subunit protein uS15 (89 aa).

The protein belongs to the universal ribosomal protein uS15 family. As to quaternary structure, part of the 30S ribosomal subunit. Forms a bridge to the 50S subunit in the 70S ribosome, contacting the 23S rRNA.

In terms of biological role, one of the primary rRNA binding proteins, it binds directly to 16S rRNA where it helps nucleate assembly of the platform of the 30S subunit by binding and bridging several RNA helices of the 16S rRNA. Functionally, forms an intersubunit bridge (bridge B4) with the 23S rRNA of the 50S subunit in the ribosome. This is Small ribosomal subunit protein uS15 from Ectopseudomonas mendocina (strain ymp) (Pseudomonas mendocina).